A 216-amino-acid chain; its full sequence is UPF0502 protein Smal_0052 (216 aa).

Belongs to the UPF0502 family.

In Stenotrophomonas maltophilia (strain R551-3), this protein is UPF0502 protein Smal_0052.